The chain runs to 198 residues: Probable GTP-binding protein EngB (198 aa).

The EngB-type G domain occupies 22-197 (TLPEYAFIGR…LDYIEGINNS (176 aa)). GTP contacts are provided by residues 30–37 (GRSNVGKS), 57–61 (GKTQL), 75–78 (DLPG), 142–145 (TKAD), and 175–178 (ITSA). Mg(2+) contacts are provided by S37 and T59.

Belongs to the TRAFAC class TrmE-Era-EngA-EngB-Septin-like GTPase superfamily. EngB GTPase family. Mg(2+) is required as a cofactor.

Functionally, necessary for normal cell division and for the maintenance of normal septation. The sequence is that of Probable GTP-binding protein EngB from Christiangramia forsetii (strain DSM 17595 / CGMCC 1.15422 / KT0803) (Gramella forsetii).